Here is a 354-residue protein sequence, read N- to C-terminus: Uroporphyrinogen decarboxylase (354 aa).

Substrate-binding positions include 27-31 (RQAGR), Asp-77, Tyr-154, Thr-209, and His-327.

This sequence belongs to the uroporphyrinogen decarboxylase family. As to quaternary structure, homodimer.

The protein resides in the cytoplasm. It carries out the reaction uroporphyrinogen III + 4 H(+) = coproporphyrinogen III + 4 CO2. It functions in the pathway porphyrin-containing compound metabolism; protoporphyrin-IX biosynthesis; coproporphyrinogen-III from 5-aminolevulinate: step 4/4. Functionally, catalyzes the decarboxylation of four acetate groups of uroporphyrinogen-III to yield coproporphyrinogen-III. This chain is Uroporphyrinogen decarboxylase, found in Klebsiella pneumoniae (strain 342).